Here is a 562-residue protein sequence, read N- to C-terminus: MIYDDKIFGDLCHKEFLVEREVKKLEEIYLEEVLPEDPKPEDEIEFTFNCPLKFHITSGKIVKDNREIYTFNIQERKTQWNDSIFNFSEIIKIKIPPLKENGLYQIHLYEMNEKIYEQYLSIDNFEAPLWSEESIIYHIFIDRFAKDEKEVEYSENLKEKLGGNLKGILSRLDYIENLGINTIWISPIFKSTSYHGYDIEDYFEIDPIWGTKEDLKKLVREAFNRGIRIILDFVPNHMSYKNPIFQKALKDKNSNLRSWFIFKGEDYETFFGVKSMPKINLKNKEAIDYIINAAKYWIREFGISGYRMDHATGPDINFWSIFYYNLKSEFPETFYFGEIVETPKETKKYVGKFDGTLDFYLFKIIRDFFIGKRWSTKEFVKMIDLEEKFYGNKFKRISFLENHDSNRFLWVAKDKKLLRLASIFQFSINAIPIIYNGQEMGCSQYRDILEGNRTLHEHARLPIPWSDDKQDKELIDFYRQLVKIRKSHPALYKGTFIPIFSDMISFIKETQEESILVLINIEDKEEIFNLNGTYRDLFSGNIYTNSLKLGPMSAHLLLRIDH.

N236 contributes to the Ca(2+) binding site. D309 serves as the catalytic Nucleophile. E338 acts as the Proton donor in catalysis.

The protein belongs to the glycosyl hydrolase 13 family. As to quaternary structure, monomer. Ca(2+) is required as a cofactor.

It localises to the cytoplasm. It catalyses the reaction Endohydrolysis of (1-&gt;4)-alpha-D-glucosidic linkages in polysaccharides containing three or more (1-&gt;4)-alpha-linked D-glucose units.. In Dictyoglomus thermophilum (strain ATCC 35947 / DSM 3960 / H-6-12), this protein is Alpha-amylase 2 (amyB).